The following is a 441-amino-acid chain: POC1 centriolar protein homolog A (441 aa).

WD repeat units lie at residues 16-55 (GHRD…RAYR), 58-97 (GHKD…ESTV), 100-139 (AHTG…FLFS), 142-181 (QHIN…CIHS), 184-223 (EHGG…LIQH), 226-265 (VHSG…LLYT), and 268-307 (GHQG…ASYA). The disordered stretch occupies residues 323–380 (DYTSGVPAADRHRPERNAQTDQADDLEPRHIQMSAKDRSSPLSYTSRSIDQHHPQAED). Basic and acidic residues-rich tracts occupy residues 331–340 (ADRHRPERNA), 348–361 (LEPR…KDRS), and 371–380 (IDQHHPQAED). Residues 400–427 (LTRTVGILEQRLSLTEDKLKECIDNQQA) are a coiled coil.

Belongs to the WD repeat POC1 family. In terms of assembly, interacts with pat.

The protein resides in the cytoplasm. It is found in the cytoskeleton. In terms of biological role, may play an important role in centriole assembly and/or stability and ciliogenesis. The chain is POC1 centriolar protein homolog A (poc1a) from Xenopus tropicalis (Western clawed frog).